The following is a 500-amino-acid chain: Aromatic-L-amino-acid decarboxylase (500 aa).

P102 serves as a coordination point for L-tryptophan. S168 is a pyridoxal 5'-phosphate binding site. Residue H203 coordinates L-tryptophan. Residue T262 coordinates pyridoxal 5'-phosphate. H318 serves as a coordination point for L-tryptophan. K319 carries the post-translational modification N6-(pyridoxal phosphate)lysine. Residue Y348 coordinates L-tryptophan.

The protein belongs to the group II decarboxylase family. As to quaternary structure, homodimer. Requires pyridoxal 5'-phosphate as cofactor.

The catalysed reaction is L-tryptophan + H(+) = tryptamine + CO2. It catalyses the reaction 5-hydroxy-L-tryptophan + H(+) = serotonin + CO2. Functionally, catalyzes the decarboxylation of L-tryptophan to tryptamine and L-5-hydroxytryptophan to serotonin, respectively. This Catharanthus roseus (Madagascar periwinkle) protein is Aromatic-L-amino-acid decarboxylase.